The chain runs to 92 residues: Bombyxin A-1 (92 aa).

An N-terminal signal peptide occupies residues 1–19 (MKILLAIALMLSTVMWVST). At glutamine 20 the chain carries Pyrrolidone carboxylic acid. Intrachain disulfides connect cysteine 29/cysteine 79, cysteine 41/cysteine 92, and cysteine 78/cysteine 83. The propeptide at 50 to 70 (SGAQFASYGSAWLMPYSEGRG) is c peptide like.

It belongs to the insulin family. In terms of assembly, heterodimer of a B chain and an A chain linked by two disulfide bonds.

It is found in the secreted. Its function is as follows. Brain peptide responsible for activation of prothoracic glands to produce ecdysone in insects. This is Bombyxin A-1 (BBXA1) from Bombyx mori (Silk moth).